A 460-amino-acid chain; its full sequence is Bifunctional protein GlmU (460 aa).

Positions 1–229 (MTNYAIILAA…FNESLGVNDR (229 aa)) are pyrophosphorylase. UDP-N-acetyl-alpha-D-glucosamine is bound by residues 8–11 (LAAG), lysine 22, glutamine 72, and 77–78 (GT). Aspartate 102 is a binding site for Mg(2+). Glycine 139, glutamate 154, asparagine 169, and asparagine 227 together coordinate UDP-N-acetyl-alpha-D-glucosamine. Asparagine 227 contributes to the Mg(2+) binding site. The interval 230-250 (VALATAETVMRQRITQKHMVN) is linker. An N-acetyltransferase region spans residues 251–460 (GVTFQNPETV…RLAHHPSRSK (210 aa)). Residues arginine 332 and lysine 350 each contribute to the UDP-N-acetyl-alpha-D-glucosamine site. The active-site Proton acceptor is the histidine 362. UDP-N-acetyl-alpha-D-glucosamine-binding residues include tyrosine 365 and asparagine 376. Residues alanine 379, 385–386 (NY), serine 404, alanine 422, and arginine 439 contribute to the acetyl-CoA site.

The protein in the N-terminal section; belongs to the N-acetylglucosamine-1-phosphate uridyltransferase family. It in the C-terminal section; belongs to the transferase hexapeptide repeat family. As to quaternary structure, homotrimer. It depends on Mg(2+) as a cofactor.

It localises to the cytoplasm. It carries out the reaction alpha-D-glucosamine 1-phosphate + acetyl-CoA = N-acetyl-alpha-D-glucosamine 1-phosphate + CoA + H(+). It catalyses the reaction N-acetyl-alpha-D-glucosamine 1-phosphate + UTP + H(+) = UDP-N-acetyl-alpha-D-glucosamine + diphosphate. The protein operates within nucleotide-sugar biosynthesis; UDP-N-acetyl-alpha-D-glucosamine biosynthesis; N-acetyl-alpha-D-glucosamine 1-phosphate from alpha-D-glucosamine 6-phosphate (route II): step 2/2. It functions in the pathway nucleotide-sugar biosynthesis; UDP-N-acetyl-alpha-D-glucosamine biosynthesis; UDP-N-acetyl-alpha-D-glucosamine from N-acetyl-alpha-D-glucosamine 1-phosphate: step 1/1. It participates in bacterial outer membrane biogenesis; LPS lipid A biosynthesis. Catalyzes the last two sequential reactions in the de novo biosynthetic pathway for UDP-N-acetylglucosamine (UDP-GlcNAc). The C-terminal domain catalyzes the transfer of acetyl group from acetyl coenzyme A to glucosamine-1-phosphate (GlcN-1-P) to produce N-acetylglucosamine-1-phosphate (GlcNAc-1-P), which is converted into UDP-GlcNAc by the transfer of uridine 5-monophosphate (from uridine 5-triphosphate), a reaction catalyzed by the N-terminal domain. In Streptococcus pyogenes serotype M5 (strain Manfredo), this protein is Bifunctional protein GlmU.